We begin with the raw amino-acid sequence, 20 residues long: Apidaecin 3+ (20 aa).

Positions 1 to 20 are disordered; that stretch reads GKPSRPRPAPIQPRPPHPRL.

The protein belongs to the apidaecin family.

It localises to the secreted. Functionally, antimicrobial peptide active against many Gram-negative enterobacterial and plant-associated bacterial species. Not active against other bacterial species like H.pylori, P.mirabilis, B.pertussis or N.gonorrhoeae. Among others, also active against S.typhi. Its function is as follows. Not active against S.typhi. In Pimpla disparis (Parasitic wasp), this protein is Apidaecin 3+.